The sequence spans 179 residues: MAKTAMAYKEKMKELSMLSLICSCFYPEPRNMNIYKYDDMEVKQINKRASGQAFELILKPPSPVSEAPRTLASPKKKELSLEEIQKKLEAAEERRKSQEAQVLKHLAEKREHEREVLQKALEENNNFSKMAEEKLILKMEQIKENREANLAALIERLQEKERHAAEVRRNKELQVELSG.

The interval 1–26 is membrane attachment; the sequence is MAKTAMAYKEKMKELSMLSLICSCFY. 6 positions are modified to phosphoserine: S16, S50, S62, S73, S80, and S97. The region spanning 38 to 179 is the SLD domain; the sequence is DDMEVKQINK…NKELQVELSG (142 aa). The tract at residues 39–96 is regulatory/phosphorylation domain; that stretch reads DMEVKQINKRASGQAFELILKPPSPVSEAPRTLASPKKKELSLEEIQKKLEAAEERRK. Residues 74–179 are a coiled coil; sequence PKKKELSLEE…NKELQVELSG (106 aa).

The protein belongs to the stathmin family. Expression is neuron-specific and found in cerebellum, forebrain, midbrain, tectum and spinal cord.

It localises to the cytoplasm. The protein resides in the perinuclear region. The protein localises to the cell projection. It is found in the growth cone. Its subcellular location is the membrane. It localises to the axon. The protein resides in the lamellipodium. Its function is as follows. Is a key regulator of neurite extension through regulation of microtubule instabilily. The polypeptide is Stathmin-2 (STMN2) (Gallus gallus (Chicken)).